The chain runs to 2157 residues: Unconventional myosin-IXb (2157 aa).

N-acetylserine is present on S2. The Ras-associating domain occupies 15 to 114 (AAYHLHIYPQ…YYFLLQERNA (100 aa)). A Myosin motor domain is found at 146-953 (ADFDDLCNLP…ERQALQETLH (808 aa)). An ATP-binding site is contributed by 239–246 (GESGSGKT). Residues 709-734 (AEKAAGMSSPGAQSHPEELPRGASTP) form a disordered region. S716 and S717 each carry phosphoserine. Residues 844-855 (KAEPFFIRCIRS) form an actin-binding region. The interval 940–1044 (LKETERQALQ…CRGHLQRKSF (105 aa)) is neck or regulatory domain. 4 consecutive IQ domains span residues 957–977 (VRKI…RHFL), 979–1000 (MKRA…RALE), 1001–1023 (RTQA…LYRH), and 1024–1053 (QKQS…EKQK). S1045 is modified (phosphoserine). The interval 1045-2157 (SQMISEKQKA…LPPASGQTNG (1113 aa)) is tail. The stretch at 1046 to 1071 (QMISEKQKAEEKEREALEAARAGAEE) forms a coiled coil. Disordered stretches follow at residues 1046–1298 (QMIS…TQIQ), 1320–1410 (AAAS…GSQV), and 1455–1484 (GLEA…KKNR). Composition is skewed to basic and acidic residues over residues 1050–1063 (EKQK…EALE), 1109–1122 (SPLE…EAPS), 1136–1160 (ESHE…EHVK), 1168–1183 (SCKE…RRVT), and 1191–1201 (LEDKKESREDE). S1114, S1115, and S1122 each carry phosphoserine. Residues 1211–1222 (ENTSQKQPTEQP) show a composition bias toward polar residues. Phosphoserine occurs at positions 1242, 1253, 1261, and 1267. At T1271 the chain carries Phosphothreonine. Residues S1290, S1323, and S1331 each carry the phosphoserine modification. T1346 carries the post-translational modification Phosphothreonine. Residues S1354, S1356, and S1405 each carry the phosphoserine modification. The span at 1467 to 1478 (AAGEKRTKEPGG) shows a compositional bias: basic and acidic residues. Residues 1632 to 1681 (GHVFASYQVSIPQSCEQCLSYIWLMDKALLCSVCKMTCHKKCVHKIQSHC) form a Phorbol-ester/DAG-type zinc finger. In terms of domain architecture, Rho-GAP spans 1703–1888 (DSLTSDKASV…MLIKEQMRKY (186 aa)). The tract at residues 1739–1744 (AANRTR) is interaction with RHOA. A coiled-coil region spans residues 1880 to 1901 (LIKEQMRKYKVKMEEISQLEAA). A phosphoserine mark is found at S1926, S1972, S1992, and S1999. A coiled-coil region spans residues 1959-1989 (EDREKEILIERIQSIKEEKEDITYRLPELDP). The segment covering 1980 to 1993 (ITYRLPELDPRGSD) has biased composition (basic and acidic residues). Residues 1980-2157 (ITYRLPELDP…LPPASGQTNG (178 aa)) form a disordered region. T2005 carries the phosphothreonine modification. Residues 2021 to 2037 (PPAPALPCPGAPTPSPL) show a composition bias toward pro residues. At S2050 the chain carries Phosphoserine. Residues 2081–2093 (PRWAPGAREAAAP) show a composition bias toward low complexity. Residues 2095-2106 (RRREPPARRPDQ) are compositionally biased toward basic and acidic residues. At S2141 the chain carries Phosphoserine.

It belongs to the TRAFAC class myosin-kinesin ATPase superfamily. Myosin family. Interacts (via IQ domains) with CALM. Interacts with RHOA. Interacts (via Rho-GAP domain) with ROBO1; this inhibits the interaction with RHOA and the stimulation of RHOA GTPase activity, and thereby increases the levels of active RHOA. Detected in peripheral blood leukocytes (at protein level). Expressed predominantly in peripheral blood leukocytes and at lower levels, in thymus, spleen, testis, prostate, ovary, brain, small intestine and lung.

It localises to the cytoplasm. The protein resides in the cell cortex. The protein localises to the perinuclear region. Its subcellular location is the cytoskeleton. Functionally, myosins are actin-based motor molecules with ATPase activity. Unconventional myosins serve in intracellular movements. Binds actin with high affinity both in the absence and presence of ATP and its mechanochemical activity is inhibited by calcium ions. Also acts as a GTPase activator for RHOA. Plays a role in the regulation of cell migration via its role as RHOA GTPase activator. This is regulated by its interaction with the SLIT2 receptor ROBO1; interaction with ROBO1 impairs interaction with RHOA and subsequent activation of RHOA GTPase activity, and thereby leads to increased levels of active, GTP-bound RHOA. This chain is Unconventional myosin-IXb (MYO9B), found in Homo sapiens (Human).